The chain runs to 610 residues: Zinc metalloproteinase-disintegrin-like bothropasin (610 aa).

The signal sequence occupies residues 1–20 (MIEVLLVTICLAAFPYQGSS). A propeptide spanning residues 21 to 191 (IILESGNVND…ASQLVVTAEQ (171 aa)) is cleaved from the precursor. Q192 carries the post-translational modification Pyrrolidone carboxylic acid. The Peptidase M12B domain maps to 198–394 (RYVELFIVVD…ENPQCILNEP (197 aa)). Ca(2+)-binding residues include E201 and D285. Intrachain disulfides connect C309/C389, C349/C373, and C351/C356. H334 serves as a coordination point for Zn(2+). E335 is an active-site residue. Positions 338 and 344 each coordinate Zn(2+). Residue N372 is glycosylated (N-linked (GlcNAc...) asparagine). Positions 389, 392, 404, 407, 409, 411, 414, and 417 each coordinate Ca(2+). Positions 402–488 (PPVCGNELLE…ECPADVFHKN (87 aa)) constitute a Disintegrin domain. Disulfide bonds link C405-C424, C405-C434, C416-C429, C416-C434, C418-C424, C428-C451, C442-C448, C447-C473, C460-C480, C467-C492, C467-C499, C492-C504, C499-C504, C511-C526, C511-C561, C526-C572, C539-C549, C549-C556, C556-C598, C561-C572, C592-C603, and C598-C603. Residues 466-468 (ECD) carry the D/ECD-tripeptide motif. D468, P469, E471, D483, and V484 together coordinate Ca(2+).

This sequence belongs to the venom metalloproteinase (M12B) family. P-III subfamily. P-IIIb sub-subfamily. As to quaternary structure, monomer. Requires Zn(2+) as cofactor. As to expression, expressed by the venom gland.

It is found in the secreted. It carries out the reaction Cleavage of 5-His-|-Leu-6, 10-His-|-Leu-11, 14-Ala-|-Leu-15, 16-Tyr-|-Leu-17 and 24-Phe-|-Phe-25 in insulin B chain.. With respect to regulation, inhibited by EDTA and EGTA. Its function is as follows. Has caseinolytic activity. Causes hemorrhage on rabbit skin and causes myonecrosis in mouse tibialis anterior muscle. Inhibits platelet aggregation. The chain is Zinc metalloproteinase-disintegrin-like bothropasin from Bothrops jararaca (Jararaca).